The chain runs to 334 residues: Probable quinone oxidoreductase (334 aa).

Belongs to the zinc-containing alcohol dehydrogenase family. Quinone oxidoreductase subfamily.

It carries out the reaction 2 a quinone + NADPH + H(+) = 2 a 1,4-benzosemiquinone + NADP(+). The polypeptide is Probable quinone oxidoreductase (ZTA1) (Saccharomyces cerevisiae (strain ATCC 204508 / S288c) (Baker's yeast)).